The chain runs to 315 residues: Atrochrysone carboxyl ACP thioesterase (315 aa).

4 residues coordinate Zn(2+): His95, His97, Asp99, and His100. Asp99 (proton donor/acceptor) is an active-site residue.

The protein belongs to the metallo-beta-lactamase superfamily. Zn(2+) is required as a cofactor. As to expression, endocrocin is specifically produced in conidia.

It catalyses the reaction atrochrysone carboxyl-[ACP] + H2O = atrochrysone carboxylate + holo-[ACP] + H(+). Functionally, atrochrysone carboxyl ACP thioesterase; part of the gene cluster that mediates the biosynthesis of endocrocin, a simple anthraquinone interesting for many biotechnological applications. The pathway begins with the synthesis of atrochrysone thioester by the polyketide synthase (PKS) encA. The atrochrysone carboxyl ACP thioesterase encB then breaks the thioester bond and releases the atrochrysone carboxylic acid from encA. The atrochrysone carboxylic acid is then converted to endocrocin anthrone which is further oxidized into endocrocin by the anthrone oxygenase encC. The exact function of encD has not been identified yet, but it negatively regulates endocrocin production, likely through the modification of endocrocin itself. This is Atrochrysone carboxyl ACP thioesterase from Aspergillus fumigatus (strain ATCC MYA-4609 / CBS 101355 / FGSC A1100 / Af293) (Neosartorya fumigata).